An 85-amino-acid chain; its full sequence is 4-hydroxyphenylacetate decarboxylase small subunit (85 aa).

Residues His4, Cys7, Cys20, Cys34, Cys43, Cys46, Cys60, and Cys78 each contribute to the [4Fe-4S] cluster site.

This sequence belongs to the HPA decarboxylase small subunit family. Heterooctamer consisting of 4 large (HpdB) subunits and 4 small (HpdC) subunits, arranged as a tetramer of heterodimers. [4Fe-4S] cluster serves as cofactor.

It carries out the reaction 4-hydroxyphenylacetate + H(+) = 4-methylphenol + CO2. It catalyses the reaction 3,4-dihydroxyphenylacetate + H(+) = 4-methylcatechol + CO2. Component of the HPA decarboxylase that decarboxylates phenylacetates with a hydroxyl group in the p-position. Active toward 4-hydroxyphenylacetate and 3,4-dihydroxyphenylacetate, forming 4-methylphenol and 4-methylcatechol, respectively. Is likely involved in the catabolism of aromatic amino acids such as tyrosine fermentation. 4-methylphenol (p-cresol) formation provides metabolic toxicity, which allows an active suppression of other microbes and may provide growth advantages for the producers in highly competitive environments. The small subunit is essential for enzymatic activity of HPA decarboxylase, and also seems to be involved in the regulation of the enzyme oligomeric state and catalytic activity. The protein is 4-hydroxyphenylacetate decarboxylase small subunit of Clostridioides difficile (strain CD196) (Peptoclostridium difficile).